Here is a 624-residue protein sequence, read N- to C-terminus: MSTASPLHHGHGNGSYANSPAPTGVTGRDAGVAAAAVADSAVRSGSVPASASGSAPGSASGSMYGEAHTQHHTGHHHYSAHHTHSHGALTSPVNGGHSSSWSPYGYPAAPVYGGSPSPYGHNAYSQYASGYGYANGTAHHVATAPTTPSATSTAYHTGVNGMMMHHGQHAGYGYSSHHLGSHTPTHTHTHSSAYFMNGDGAHSHLNSSAHLTSPSYTTAPQYSTQLPLAGRHRVTTTLWEDEGTLCFQVDARGVCVARRHDNNMINGTKLLNVCGMSRGKRDGILKNEKERIVVKVGAMHLKGVWISFARAKQLAEQNGIADALYPLFEPNIQSFLYHPDNYPRTAAVIAAAQERQAQRQRAPGGQPSPGANGTSQAPPLMRANTTPSNGDTSTFSSGLSSLGSWTGSHDQGHASAPTTAQPSPSSMHNGATQMHMSLSNHGTASPTYAQSQQQQQQQQQQQQQQQQQQQQQQQQAYPMTAAQQLARPSVGDRRQSAPISLNNSVGHAENPYGATNLGGAANGGLVNGARKVSGLKRSWNDADDLNGSAAASPTERDMQRSGSGGSNGLKLDGDDLHSPDSSDDRLAKKTRGMPQRGGGATTAMPSMSTNMLMGVGNGSGIHHE.

Disordered regions lie at residues 1–24 (MSTA…APTG) and 43–99 (RSGS…GHSS). Over residues 43–62 (RSGSVPASASGSAPGSASGS) the composition is skewed to low complexity. A compositionally biased stretch (basic residues) spans 70-85 (QHHTGHHHYSAHHTHS). The 107-residue stretch at 233–339 (RVTTTLWEDE…PNIQSFLYHP (107 aa)) folds into the HTH APSES-type domain. A DNA-binding region (H-T-H motif) is located at residues 267–288 (GTKLLNVCGMSRGKRDGILKNE). Over residues 352–362 (AQERQAQRQRA) the composition is skewed to low complexity. 3 disordered regions span residues 352–456 (AQER…QQQQ), 474–504 (QQAY…LNNS), and 538–624 (SWND…IHHE). Residues 369–391 (PGANGTSQAPPLMRANTTPSNGD) show a composition bias toward polar residues. Residues 392-426 (TSTFSSGLSSLGSWTGSHDQGHASAPTTAQPSPSS) are compositionally biased toward low complexity. The span at 427-451 (MHNGATQMHMSLSNHGTASPTYAQS) shows a compositional bias: polar residues. Over residues 571–587 (LDGDDLHSPDSSDDRLA) the composition is skewed to basic and acidic residues. The segment covering 615 to 624 (VGNGSGIHHE) has biased composition (gly residues).

The protein belongs to the EFG1/PHD1/stuA family. Phosphorylated but is not a target of cAMP signaling.

Its subcellular location is the nucleus. In terms of biological role, transcription factor that regulates asexual reproduction. Binds the StuA-response elements (StRE) with the consensus sequence 5'-(A/T)CGCG(T/A)N(A/C)-3' at the promoters of target genes. Regulates dimorphism, virulence, and the sporulation program. Required for mating, gall induction, and sporogenesis in maize tissue. Regulates expression of the filament-down-regulated gene UM00205 and the teliospore-specific gene ssp1. This is Cell pattern formation-associated protein ust1 (ust1) from Mycosarcoma maydis (Corn smut fungus).